The following is a 460-amino-acid chain: 7-cyano-7-deazaguanine synthase 2 (460 aa).

Residue cysteine 2 is the For GATase activity of the active site. Residues 2–225 (CSVTGVLIIK…PYSIVEVNDN (224 aa)) enclose the Glutamine amidotransferase type-2 domain. 245–255 (ASGGLDSTVAA) lines the ATP pocket. Cysteine 426, cysteine 434, cysteine 437, and cysteine 440 together coordinate Zn(2+).

This sequence belongs to the QueC family. It depends on Zn(2+) as a cofactor.

The enzyme catalyses 7-carboxy-7-deazaguanine + NH4(+) + ATP = 7-cyano-7-deazaguanine + ADP + phosphate + H2O + H(+). It participates in purine metabolism; 7-cyano-7-deazaguanine biosynthesis. Its function is as follows. Catalyzes the ATP-dependent conversion of 7-carboxy-7-deazaguanine (CDG) to 7-cyano-7-deazaguanine (preQ(0)). This Sulfurisphaera tokodaii (strain DSM 16993 / JCM 10545 / NBRC 100140 / 7) (Sulfolobus tokodaii) protein is 7-cyano-7-deazaguanine synthase 2 (queC2).